Here is a 386-residue protein sequence, read N- to C-terminus: 1-deoxy-D-xylulose 5-phosphate reductoisomerase (386 aa).

6 residues coordinate NADPH: Thr-7, Gly-8, Ser-9, Ile-10, Ala-33, and Asn-124. 1-deoxy-D-xylulose 5-phosphate is bound at residue Lys-125. Residue Glu-126 participates in NADPH binding. Residue Asp-148 coordinates Mn(2+). 1-deoxy-D-xylulose 5-phosphate contacts are provided by Ser-149, Glu-150, Ser-174, and His-197. A Mn(2+)-binding site is contributed by Glu-150. Gly-203 provides a ligand contact to NADPH. Positions 210, 215, 216, and 219 each coordinate 1-deoxy-D-xylulose 5-phosphate. Glu-219 provides a ligand contact to Mn(2+).

Belongs to the DXR family. Mg(2+) is required as a cofactor. Requires Mn(2+) as cofactor.

It catalyses the reaction 2-C-methyl-D-erythritol 4-phosphate + NADP(+) = 1-deoxy-D-xylulose 5-phosphate + NADPH + H(+). It participates in isoprenoid biosynthesis; isopentenyl diphosphate biosynthesis via DXP pathway; isopentenyl diphosphate from 1-deoxy-D-xylulose 5-phosphate: step 1/6. Its function is as follows. Catalyzes the NADPH-dependent rearrangement and reduction of 1-deoxy-D-xylulose-5-phosphate (DXP) to 2-C-methyl-D-erythritol 4-phosphate (MEP). The polypeptide is 1-deoxy-D-xylulose 5-phosphate reductoisomerase (Kitasatospora griseola (Streptomyces griseolosporeus)).